A 347-amino-acid polypeptide reads, in one-letter code: Fatty acid elongase 2 (347 aa).

The Lumenal segment spans residues 1–62 (MNSLVTQYAA…PSEFQFIAGE (62 aa)). N-linked (GlcNAc...) asparagine glycosylation is present at N32. The helical transmembrane segment at 63–83 (LPLSTLPPVLYAITAYYVIIF) threads the bilayer. The Cytoplasmic segment spans residues 84 to 96 (GGRFLLSKSKPFK). The chain crosses the membrane as a helical span at residues 97-119 (LNGLFQLHNLVLTSLSLTLLLLM). Residues 120–122 (VEQ) lie on the Lumenal side of the membrane. A helical membrane pass occupies residues 123-142 (LVPIIVQHGLYFAICNIGAW). Over 143-146 (TQPL) the chain is Cytoplasmic. Residues 147 to 169 (VTLYYMNYIVKFIEFIDTFFLVL) traverse the membrane as a helical segment. The Lumenal segment spans residues 170 to 200 (KHKKLTFLHTYHHGATALLCYTQLMGTTSIS). The short motif at 178–182 (HTYHH) is the HxxHH motif element. A helical membrane pass occupies residues 201-221 (WVPISLNLGVHVVMYWYYFLA). At 222-231 (ARGIRVWWKE) the chain is on the cytoplasmic side. A helical transmembrane segment spans residues 232-254 (WVTRFQIIQFVLDIGFIYFAVYQ). The Lumenal segment spans residues 255 to 275 (KAVHLYFPILPHCGDCVGSTT). A helical membrane pass occupies residues 276–296 (ATFAGCAIISSYLVLFISFYI). Residues 297–347 (NVYKRKGTKTSRVVKRAHGGVAAKVNEYVNVDLKNVPTPSPSPKPQHRRKR) lie on the Cytoplasmic side of the membrane. The residue at position 334 (T334) is a Phosphothreonine. 2 positions are modified to phosphoserine: S336 and S338. Positions 344–347 (RRKR) match the Di-lysine-like motif motif.

This sequence belongs to the ELO family.

Its subcellular location is the endoplasmic reticulum membrane. It catalyses the reaction a very-long-chain acyl-CoA + malonyl-CoA + H(+) = a very-long-chain 3-oxoacyl-CoA + CO2 + CoA. It carries out the reaction octadecanoyl-CoA + malonyl-CoA + H(+) = 3-oxoeicosanoyl-CoA + CO2 + CoA. The enzyme catalyses hexadecanoyl-CoA + malonyl-CoA + H(+) = 3-oxooctadecanoyl-CoA + CO2 + CoA. The catalysed reaction is eicosanoyl-CoA + malonyl-CoA + H(+) = 3-oxodocosanoyl-CoA + CO2 + CoA. It catalyses the reaction docosanoyl-CoA + malonyl-CoA + H(+) = 3-oxotetracosanoyl-CoA + CO2 + CoA. In terms of biological role, component of a microsomal membrane-bound long-chain fatty acid elongation system, which produces the 20-26-carbon very long-chain fatty acids (VLCFA) from long-chain fatty acid precursors and is involved ceramide and inositol sphingolipid biosynthesis. Component of elongase II, which elongates 16-18 carbon fatty acyl-CoAs such as palmitoyl-CoA and stearoyl-CoA to 20-22-carbon fatty acids by incorporation of malonyl-CoA. Involved in the synthesis of 1,3-beta-glucan. The enzymes active site faces the cytosol, whereas VLCFA length is determined by a lysine near the luminal end of transmembrane helix 6. Plays an important role in lipotoxic cell death induced by oleic acid through maintaining a balanced fatty acid composition in thr plasma membrane. In Saccharomyces cerevisiae (strain ATCC 204508 / S288c) (Baker's yeast), this protein is Fatty acid elongase 2.